The sequence spans 174 residues: FMN reductase (NADH) RutF (174 aa).

It belongs to the non-flavoprotein flavin reductase family. RutF subfamily.

The catalysed reaction is FMNH2 + NAD(+) = FMN + NADH + 2 H(+). In terms of biological role, catalyzes the reduction of FMN to FMNH2 which is used to reduce pyrimidine by RutA via the Rut pathway. In Stutzerimonas stutzeri (strain A1501) (Pseudomonas stutzeri), this protein is FMN reductase (NADH) RutF.